The following is a 375-amino-acid chain: 23S rRNA (uracil(747)-C(5))-methyltransferase RlmC (375 aa).

The [4Fe-4S] cluster site is built by cysteine 3, cysteine 11, cysteine 14, and cysteine 87. S-adenosyl-L-methionine-binding residues include glutamine 212, phenylalanine 241, glutamate 262, and asparagine 307. The active-site Nucleophile is cysteine 334.

Belongs to the class I-like SAM-binding methyltransferase superfamily. RNA M5U methyltransferase family. RlmC subfamily.

It carries out the reaction uridine(747) in 23S rRNA + S-adenosyl-L-methionine = 5-methyluridine(747) in 23S rRNA + S-adenosyl-L-homocysteine + H(+). Catalyzes the formation of 5-methyl-uridine at position 747 (m5U747) in 23S rRNA. The chain is 23S rRNA (uracil(747)-C(5))-methyltransferase RlmC from Salmonella typhi.